The sequence spans 160 residues: Eukaryotic translation initiation factor 5A (160 aa).

The segment covering 1–12 (MSDEEHHFESKA) has biased composition (basic and acidic residues). Residues 1 to 21 (MSDEEHHFESKADAGASKTFP) are disordered. Hypusine is present on K52.

Belongs to the eIF-5A family. Lys-53 undergoes hypusination, a unique post-translational modification that consists in the addition of a butylamino group from spermidine to lysine side chain, leading to the formation of the unusual amino acid hypusine. eIF-5As are the only known proteins to undergo this modification, which is essential for their function.

Functionally, translation factor that promotes translation elongation and termination, particularly upon ribosome stalling at specific amino acid sequence contexts. Binds between the exit (E) and peptidyl (P) site of the ribosome and promotes rescue of stalled ribosome: specifically required for efficient translation of polyproline-containing peptides as well as other motifs that stall the ribosome. Acts as a ribosome quality control (RQC) cofactor by joining the RQC complex to facilitate peptidyl transfer during CAT tailing step. This Manihot esculenta (Cassava) protein is Eukaryotic translation initiation factor 5A.